A 183-amino-acid chain; its full sequence is Adenine phosphoribosyltransferase (183 aa).

Belongs to the purine/pyrimidine phosphoribosyltransferase family. Homodimer.

The protein localises to the cytoplasm. It catalyses the reaction AMP + diphosphate = 5-phospho-alpha-D-ribose 1-diphosphate + adenine. The protein operates within purine metabolism; AMP biosynthesis via salvage pathway; AMP from adenine: step 1/1. In terms of biological role, catalyzes a salvage reaction resulting in the formation of AMP, that is energically less costly than de novo synthesis. In Shigella flexneri serotype 5b (strain 8401), this protein is Adenine phosphoribosyltransferase.